Here is a 210-residue protein sequence, read N- to C-terminus: GRF1-interacting factor 1 (210 aa).

The segment covering 135-152 (ATLQHQQLHHSQLGMSSS) has biased composition (low complexity). A disordered region spans residues 135–210 (ATLQHQQLHH…LYLKSSDDGN (76 aa)). The segment covering 182–198 (GSGGGGEGRGGSSGDGG) has biased composition (gly residues).

This sequence belongs to the SS18 family. In terms of assembly, interacts with GRF1, GRF2, GRF5 and GRF9. Strongly expressed in actively growing and developing tissues, such as roots, upper stems, and shoot tips and flower buds. Also expressed in mature flowers. Not expressed in the shoot apical meristem (SAM). Highly accumulated in the proximal part of leaf primordia, in the key proliferative zone at the junction region between the leaf blade and leaf petiole.

In terms of biological role, transcription coactivator that plays a role in the regulation of cell expansion in leaf and cotyledons tissues. Component of a network formed by miR396, the GRFs and their interacting factors (GIFs) acting in the regulation of meristem function, at least partially through the control of cell proliferation. Appears to function synergistically with GRF1 as a transcriptional coactivator. Acts together with GRF5 for the development of appropriate leaf size and shape through the promotion and/or maintenance of cell proliferation activity in leaf primordia. Plays a role in adaxial/abaxial patterning and growth in leaf morphogenesis. GIFs are involved in the positive regulation of cell proliferation of lateral organs in a functionally redundant manner. Together with GATA18/HAN, mediates cotyledon identity by preventing ectopic root formation through the repression of PLT1 expression. This Arabidopsis thaliana (Mouse-ear cress) protein is GRF1-interacting factor 1.